A 953-amino-acid chain; its full sequence is 26S proteasome non-ATPase regulatory subunit 1 (953 aa).

Methionine 1 is subject to N-acetylmethionine. At threonine 273 the chain carries Phosphothreonine. A disordered region spans residues 277 to 319 (SVPGSTNTGTVPGPEKDSDSMETEEKTAGAVAGKTPDASPEPK). Positions 290-303 (PEKDSDSMETEEKT) are enriched in basic and acidic residues. Lysine 310 bears the N6-acetyllysine mark. Residue threonine 311 is modified to Phosphothreonine. Position 315 is a phosphoserine (serine 315). 10 PC repeats span residues 403–436 (TATA…PGSA), 441–474 (GGLY…DIVR), 476–510 (GGSL…VTGE), 511–545 (AAGL…EKIL), 547–580 (GLAV…ILRR), 581–616 (SGMY…DVRR), 617–649 (AAVE…PHVR), 651–685 (GAAM…YVRQ), 686–726 (GALI…DVMA), and 729–761 (GAIL…PSVV). Lysine 720 is subject to N6-acetyllysine. Threonine 830 is modified (phosphothreonine). Serine 834 is modified (phosphoserine). Disordered stretches follow at residues 839 to 881 (AKKK…LDNP) and 930 to 953 (AHGP…YIDD). Composition is skewed to basic and acidic residues over residues 842–852 (KEKEKEKKEEE) and 859–872 (AEKK…KEPE). The span at 936–953 (EEEEQEPEPPEPFEYIDD) shows a compositional bias: acidic residues.

It belongs to the proteasome subunit S1 family. As to quaternary structure, component of the 19S proteasome regulatory particle complex. The 26S proteasome consists of a 20S core particle (CP) and two 19S regulatory subunits (RP). The regulatory particle is made of a lid composed of 9 subunits, a base containing 6 ATPases and few additional components including PSMD1. Interacts with ADRM1. Interacts with ZFAND1.

In terms of biological role, component of the 26S proteasome, a multiprotein complex involved in the ATP-dependent degradation of ubiquitinated proteins. This complex plays a key role in the maintenance of protein homeostasis by removing misfolded or damaged proteins, which could impair cellular functions, and by removing proteins whose functions are no longer required. Therefore, the proteasome participates in numerous cellular processes, including cell cycle progression, apoptosis, or DNA damage repair. This Rattus norvegicus (Rat) protein is 26S proteasome non-ATPase regulatory subunit 1 (Psmd1).